We begin with the raw amino-acid sequence, 202 residues long: Matrix protein (202 aa).

Residues K9 to L31 form a disordered region. Positions P35–Y38 match the PPXY motif motif. The segment at K115–V151 is essential for glycoprotein binding.

Belongs to the lyssavirus matrix protein family. In terms of assembly, homomultimer. Interacts with nucleoprotein and with the cytoplasmic domain of glycoprotein. Interacts with host ATP6V1A; this interaction plays an important role in virion uncoating after viral entry.

It localises to the virion membrane. Its subcellular location is the host endomembrane system. It is found in the host cytoplasm. Its function is as follows. Plays a major role in assembly, budding and uncoating of virion after membrane fusion. Completely covers the ribonucleoprotein coil and keep it in condensed bullet-shaped form. Inhibits viral transcription and stimulates replication. Plays a major role in early induction of TRAIL-mediated apoptosis in infected neurons. Inhibits the integrated stress response (ISR) in the infected cell by blocking the formation of stress granules. The chain is Matrix protein (M) from Rabies virus (strain SAD B19) (RABV).